Here is a 933-residue protein sequence, read N- to C-terminus: Isoleucine--tRNA ligase (933 aa).

The 'HIGH' region signature appears at 57-67 (PYANGNIHVGH). Glu-554 lines the L-isoleucyl-5'-AMP pocket. The short motif at 595-599 (KMSKS) is the 'KMSKS' region element. Lys-598 serves as a coordination point for ATP.

Belongs to the class-I aminoacyl-tRNA synthetase family. IleS type 1 subfamily. Monomer.

The protein localises to the cytoplasm. The enzyme catalyses tRNA(Ile) + L-isoleucine + ATP = L-isoleucyl-tRNA(Ile) + AMP + diphosphate. Functionally, catalyzes the attachment of isoleucine to tRNA(Ile). As IleRS can inadvertently accommodate and process structurally similar amino acids such as valine, to avoid such errors it has two additional distinct tRNA(Ile)-dependent editing activities. One activity is designated as 'pretransfer' editing and involves the hydrolysis of activated Val-AMP. The other activity is designated 'posttransfer' editing and involves deacylation of mischarged Val-tRNA(Ile). The sequence is that of Isoleucine--tRNA ligase from Streptococcus pyogenes serotype M1.